The sequence spans 215 residues: MKLTSHEARVIGCLLEKEKTTPEQYPLSLNGLTLACNQKSSREPVMNLSEADTQAALDSLAKKRLVAEQSGFGSRVVKYKHRFCNTEFSDLQLSEDKVAIICLLLLRGPQTAGELRTRSNRLYGFNDVAQVEQALNSLAQMEPALVRQLPREPGKRESRFIELISEAETQLDTQLATQPAQASSLANDELVERVALLEQQVAELKLQVAELLGKI.

The protein belongs to the UPF0502 family.

This Shewanella loihica (strain ATCC BAA-1088 / PV-4) protein is UPF0502 protein Shew_1617.